The chain runs to 61 residues: Photosystem II reaction center protein K (61 aa).

Residues 1–24 constitute a propeptide that is removed on maturation; it reads MLNIFSLICICLHSTLYSSSFFLA. Residues 36–56 traverse the membrane as a helical segment; the sequence is IVDFMPVIPLLFFLLAFVWQA.

The protein belongs to the PsbK family. As to quaternary structure, PSII is composed of 1 copy each of membrane proteins PsbA, PsbB, PsbC, PsbD, PsbE, PsbF, PsbH, PsbI, PsbJ, PsbK, PsbL, PsbM, PsbT, PsbX, PsbY, PsbZ, Psb30/Ycf12, at least 3 peripheral proteins of the oxygen-evolving complex and a large number of cofactors. It forms dimeric complexes.

The protein resides in the plastid. The protein localises to the chloroplast thylakoid membrane. In terms of biological role, one of the components of the core complex of photosystem II (PSII). PSII is a light-driven water:plastoquinone oxidoreductase that uses light energy to abstract electrons from H(2)O, generating O(2) and a proton gradient subsequently used for ATP formation. It consists of a core antenna complex that captures photons, and an electron transfer chain that converts photonic excitation into a charge separation. The protein is Photosystem II reaction center protein K of Eucalyptus globulus subsp. globulus (Tasmanian blue gum).